A 225-amino-acid chain; its full sequence is Membrane protein (225 aa).

At 1–20 (MSNETNCTLDFEQSVELFKE) the chain is on the virion surface side. A helical membrane pass occupies residues 21–41 (YNLFITAFLLFLTIILQYGYA). Residues 42–51 (TRSKFIYILK) lie on the Intravirion side of the membrane. The chain crosses the membrane as a helical span at residues 52-72 (MIVLWCFWPLNIAVGVISCIY). Over 73–77 (PPNTG) the chain is Virion surface. A helical transmembrane segment spans residues 78–98 (GLVAAIILTVFACLSFVGYWI). At 99–225 (QSIRLFKRCR…VATGGSSLYT (127 aa)) the chain is on the intravirion side.

It belongs to the gammacoronaviruses M protein family. Homomultimer. Interacts with envelope E protein in the budding compartment of the host cell, which is located between endoplasmic reticulum and the Golgi complex. Forms a complex with HE and S proteins. Interacts with nucleocapsid N protein. This interaction probably participates in RNA packaging into the virus.

Its subcellular location is the virion membrane. The protein resides in the host Golgi apparatus membrane. Functionally, component of the viral envelope that plays a central role in virus morphogenesis and assembly via its interactions with other viral proteins. The protein is Membrane protein of Gallus gallus (Chicken).